Reading from the N-terminus, the 277-residue chain is Thymidylate synthase (277 aa).

R21 is a dUMP binding site. H51 is a binding site for (6R)-5,10-methylene-5,6,7,8-tetrahydrofolate. DUMP is bound at residue 139 to 140; it reads RR. The active-site Nucleophile is C159. DUMP contacts are provided by residues 179–182, N190, and 220–222; these read RSAD and HIY. D182 lines the (6R)-5,10-methylene-5,6,7,8-tetrahydrofolate pocket. A276 contacts (6R)-5,10-methylene-5,6,7,8-tetrahydrofolate.

It belongs to the thymidylate synthase family. Bacterial-type ThyA subfamily. As to quaternary structure, homodimer.

It localises to the cytoplasm. The enzyme catalyses dUMP + (6R)-5,10-methylene-5,6,7,8-tetrahydrofolate = 7,8-dihydrofolate + dTMP. The protein operates within pyrimidine metabolism; dTTP biosynthesis. Catalyzes the reductive methylation of 2'-deoxyuridine-5'-monophosphate (dUMP) to 2'-deoxythymidine-5'-monophosphate (dTMP) while utilizing 5,10-methylenetetrahydrofolate (mTHF) as the methyl donor and reductant in the reaction, yielding dihydrofolate (DHF) as a by-product. This enzymatic reaction provides an intracellular de novo source of dTMP, an essential precursor for DNA biosynthesis. This is Thymidylate synthase from Ruegeria sp. (strain TM1040) (Silicibacter sp.).